A 510-amino-acid polypeptide reads, in one-letter code: Putative cytochrome P450 cyp-13B1 (510 aa).

C456 is a heme binding site.

This sequence belongs to the cytochrome P450 family. The cofactor is heme.

Its function is as follows. Cytochromes P450 are a group of heme-thiolate monooxygenases. They oxidize a variety of structurally unrelated compounds, including steroids, fatty acids, and xenobiotics. May play a role in the regulation of lifespan. This Caenorhabditis elegans protein is Putative cytochrome P450 cyp-13B1.